A 427-amino-acid polypeptide reads, in one-letter code: MTEAMKITLSTQPADARWGEKATYSINNDGITLHLNGADDLGLIQRAARKIDGLGIKHVQLSGEGWDADRCWAFWQGYKAPKGTRKVEWPDLDDAQRQELDNRLMIIDWVRDTINAPAEELGPSQLAQRAVDLISNVAGDRVTYRITKGEDLRDQGYMGLHTVGRGSERSPVLLALDYNPTGDKEAPVYACLVGKGITFDSGGYSIKQTAFMDSMKSDMGGAATVTGALAFAITRGLNKRVKLFLCCADNLISGNAFKLGDIITYRNGKKVEVMNTDAEGRLVLADGLIDASAQKPELIIDAATLTGAAKTALGNDYHALFSFDDALAGRLLESAAQENEPFWRLPLAEFHRSQLPSNFAELNNTGSAAYPAGASTAAGFLSHFVENYKQGWLHIDCSATYRKAPVEQWSAGATGLGVRTIANLLTA.

Positions 195 and 200 each coordinate Mn(2+). The active site involves Lys207. 3 residues coordinate Mn(2+): Asp218, Asp277, and Glu279. Arg281 is an active-site residue.

It belongs to the peptidase M17 family. In terms of assembly, homohexamer. Mn(2+) is required as a cofactor.

The protein localises to the cytoplasm. The catalysed reaction is Release of an N-terminal amino acid, Xaa, from a peptide or arylamide. Xaa is preferably Glu or Asp but may be other amino acids, including Leu, Met, His, Cys and Gln.. In terms of biological role, probably plays an important role in intracellular peptide degradation. This chain is Peptidase B, found in Escherichia fergusonii (strain ATCC 35469 / DSM 13698 / CCUG 18766 / IAM 14443 / JCM 21226 / LMG 7866 / NBRC 102419 / NCTC 12128 / CDC 0568-73).